Reading from the N-terminus, the 156-residue chain is Protein-export protein SecB (156 aa).

Belongs to the SecB family. Homotetramer, a dimer of dimers. One homotetramer interacts with 1 SecA dimer.

The protein localises to the cytoplasm. Functionally, one of the proteins required for the normal export of preproteins out of the cell cytoplasm. It is a molecular chaperone that binds to a subset of precursor proteins, maintaining them in a translocation-competent state. It also specifically binds to its receptor SecA. In Yersinia enterocolitica serotype O:8 / biotype 1B (strain NCTC 13174 / 8081), this protein is Protein-export protein SecB.